The chain runs to 186 residues: TATA-box-binding protein B (186 aa).

2 repeat units span residues isoleucine 10–isoleucine 86 and valine 101–leucine 179.

It belongs to the TBP family.

Its function is as follows. General factor that plays a role in the activation of archaeal genes transcribed by RNA polymerase. Binds specifically to the TATA box promoter element which lies close to the position of transcription initiation. The protein is TATA-box-binding protein B (tbpB1) of Halobacterium salinarum (strain ATCC 700922 / JCM 11081 / NRC-1) (Halobacterium halobium).